The chain runs to 340 residues: Tetrathionate reductase subunit C (340 aa).

9 helical membrane passes run 19 to 39, 57 to 77, 94 to 114, 128 to 148, 164 to 184, 195 to 215, 236 to 256, 266 to 286, and 306 to 326; these read WLPWAVQYFFFIGIAACAALF, ALLIAITCAITAPLALTADLH, WMPWGALFLPLFTGFLALWFL, VTKWLALASALCAVGLLIYTG, AFPVAMFLSALQAFFALMIVA, ILWGQIWTLAALGLVVAMWVS, YYAVGWVALWVCTLLFCSLAL, VLLVLSALALCWLMRWTLLIQ, and TDGWLAILGTFGLWIALLIII.

It belongs to the NrfD family. As to quaternary structure, probably composed of three subunits: TtrA, TtrB and TtrC.

The protein resides in the cell inner membrane. Functionally, part of a membrane-bound tetrathionate reductase that catalyzes the reduction of tetrathionate to thiosulfate. TtrC probably anchors TtrA and TtrB to the periplasmic face of the cytoplasmic membrane. May transfer electrons from membrane quinol to TtrB. During mice infection, the ability to use tetrathionate as an electron acceptor is a growth advantage for S.typhimurium over the competing microbiota in the lumen of the inflamed gut. The protein is Tetrathionate reductase subunit C (ttrC) of Salmonella typhimurium (strain LT2 / SGSC1412 / ATCC 700720).